Here is a 224-residue protein sequence, read N- to C-terminus: N-(5'-phosphoribosyl)anthranilate isomerase (224 aa).

This sequence belongs to the TrpF family.

The enzyme catalyses N-(5-phospho-beta-D-ribosyl)anthranilate = 1-(2-carboxyphenylamino)-1-deoxy-D-ribulose 5-phosphate. It functions in the pathway amino-acid biosynthesis; L-tryptophan biosynthesis; L-tryptophan from chorismate: step 3/5. In Allorhizobium ampelinum (strain ATCC BAA-846 / DSM 112012 / S4) (Agrobacterium vitis (strain S4)), this protein is N-(5'-phosphoribosyl)anthranilate isomerase.